Consider the following 249-residue polypeptide: Domoic acid biosynthesis cluster protein B (249 aa).

Functionally, unknown function: part of the gene cluster that mediates the biosynthesis of domoic acid (DA) and derivatives, natural products with neurochemical activity acting as ionotropic glutamate receptor (iGluR) agonists, thus being neurotoxins causing amnesic shellfish poisoning (ASP). In Pseudo-nitzschia multiseries (Marine planktonic diatom), this protein is Domoic acid biosynthesis cluster protein B.